Consider the following 348-residue polypeptide: Lysophosphatidic acid receptor 2 (348 aa).

Residues 1 to 30 are Extracellular-facing; the sequence is MGHCYYNETIGFFYNNSGKELSSHWRPKDV. Residues Asn-7 and Asn-15 are each glycosylated (N-linked (GlcNAc...) asparagine). The helical transmembrane segment at 31 to 51 threads the bilayer; sequence VVVALGLTVSVLVLLTNLLVI. Residues 52-66 are Cytoplasmic-facing; the sequence is AAIASNRRFHQPIYY. A helical membrane pass occupies residues 67 to 87; sequence LLGNLAAADLFAGVAYLFLMF. Residues 88-104 are Extracellular-facing; sequence HTGPRTARLSLEGWFLR. The helical transmembrane segment at 105-124 threads the bilayer; it reads QGLLDTSLTASVATLLAIAV. Over 125–143 the chain is Cytoplasmic; the sequence is ERRRSVMAVQLHSRLPRGR. Residues 144–164 form a helical membrane-spanning segment; the sequence is VVMLIVGVWVAALGLGLLPAH. Over 165–185 the chain is Extracellular; sequence SWHCLCALDRCSRMAPLLSRS. The chain crosses the membrane as a helical span at residues 186 to 206; that stretch reads YLAVWALSSLLVFLLMVAVYT. The Cytoplasmic portion of the chain corresponds to 207–239; the sequence is RIFFYVRRRVQRMAEHVSCHPRYRETTLSLVKT. Residues 240-260 form a helical membrane-spanning segment; sequence VVIILGAFVVCWTPGQVVLLL. Topologically, residues 261–276 are extracellular; it reads DGLGCKSCNVLAVEKY. Residues 277–294 form a helical membrane-spanning segment; it reads FLLLAEANSLVNAAVYSC. Residues 295–348 are Cytoplasmic-facing; that stretch reads RDAEMRRTFRRLLCCACLRRSTRESAHYTSSAQGGASTRIMLPENGHPLMDSTL. Residue Cys-308 is the site of S-palmitoyl cysteine attachment. The short motif at 345–348 is the PDZ-binding element; the sequence is DSTL.

Belongs to the G-protein coupled receptor 1 family. As to quaternary structure, interacts with SLC9A3R2/NHERF2, MAGI3 and PLCB3. Interacts with RALA and GRK2.

The protein resides in the cell surface. Its subcellular location is the cell membrane. Its function is as follows. Receptor for lysophosphatidic acid (LPA), a mediator of diverse cellular activities. Seems to be coupled to the G(i)/G(o), G(12)/G(13), and G(q) families of heteromeric G proteins. Plays a key role in phospholipase C-beta (PLC-beta) signaling pathway. Stimulates phospholipase C (PLC) activity in a manner that is independent of RALA activation. This is Lysophosphatidic acid receptor 2 from Macaca fascicularis (Crab-eating macaque).